Here is a 95-residue protein sequence, read N- to C-terminus: Aspartyl/glutamyl-tRNA(Asn/Gln) amidotransferase subunit C (95 aa).

The protein belongs to the GatC family. Heterotrimer of A, B and C subunits.

The enzyme catalyses L-glutamyl-tRNA(Gln) + L-glutamine + ATP + H2O = L-glutaminyl-tRNA(Gln) + L-glutamate + ADP + phosphate + H(+). It catalyses the reaction L-aspartyl-tRNA(Asn) + L-glutamine + ATP + H2O = L-asparaginyl-tRNA(Asn) + L-glutamate + ADP + phosphate + 2 H(+). Allows the formation of correctly charged Asn-tRNA(Asn) or Gln-tRNA(Gln) through the transamidation of misacylated Asp-tRNA(Asn) or Glu-tRNA(Gln) in organisms which lack either or both of asparaginyl-tRNA or glutaminyl-tRNA synthetases. The reaction takes place in the presence of glutamine and ATP through an activated phospho-Asp-tRNA(Asn) or phospho-Glu-tRNA(Gln). The polypeptide is Aspartyl/glutamyl-tRNA(Asn/Gln) amidotransferase subunit C (Pseudomonas fluorescens (strain SBW25)).